Consider the following 389-residue polypeptide: Succinate--CoA ligase [ADP-forming] subunit beta (389 aa).

Positions 9–236 (RDLFEKHGVP…KTTADPLEEK (228 aa)) constitute an ATP-grasp domain. ATP-binding positions include Lys45, 52–54 (GRG), Ala94, and Glu99. Asn191 and Asp205 together coordinate Mg(2+). Residues Asn256 and 318 to 320 (GIT) contribute to the substrate site.

The protein belongs to the succinate/malate CoA ligase beta subunit family. As to quaternary structure, heterotetramer of two alpha and two beta subunits. The cofactor is Mg(2+).

The catalysed reaction is succinate + ATP + CoA = succinyl-CoA + ADP + phosphate. It carries out the reaction GTP + succinate + CoA = succinyl-CoA + GDP + phosphate. It functions in the pathway carbohydrate metabolism; tricarboxylic acid cycle; succinate from succinyl-CoA (ligase route): step 1/1. Its function is as follows. Succinyl-CoA synthetase functions in the citric acid cycle (TCA), coupling the hydrolysis of succinyl-CoA to the synthesis of either ATP or GTP and thus represents the only step of substrate-level phosphorylation in the TCA. The beta subunit provides nucleotide specificity of the enzyme and binds the substrate succinate, while the binding sites for coenzyme A and phosphate are found in the alpha subunit. This is Succinate--CoA ligase [ADP-forming] subunit beta from Kocuria rhizophila (strain ATCC 9341 / DSM 348 / NBRC 103217 / DC2201).